Reading from the N-terminus, the 85-residue chain is MPKPEIHPTWYPDAKVICNGEVVMTTGSTQPEIHVDVWSGNHPFFTGTQKILDTEGRVDRFMRKYGMGGAGKAGEDKKAGDKADA.

The segment at 65–85 (YGMGGAGKAGEDKKAGDKADA) is disordered. Residues 73 to 85 (AGEDKKAGDKADA) show a composition bias toward basic and acidic residues.

This sequence belongs to the bacterial ribosomal protein bL31 family. Type A subfamily. In terms of assembly, part of the 50S ribosomal subunit.

Functionally, binds the 23S rRNA. The sequence is that of Large ribosomal subunit protein bL31 from Synechococcus sp. (strain WH7803).